The primary structure comprises 132 residues: D-ribose pyranase (132 aa).

Histidine 20 serves as the catalytic Proton donor. Residues aspartate 28, histidine 98, and 120–122 each bind substrate; that span reads YAN.

It belongs to the RbsD / FucU family. RbsD subfamily. As to quaternary structure, homodecamer.

Its subcellular location is the cytoplasm. The catalysed reaction is beta-D-ribopyranose = beta-D-ribofuranose. It functions in the pathway carbohydrate metabolism; D-ribose degradation; D-ribose 5-phosphate from beta-D-ribopyranose: step 1/2. Functionally, catalyzes the interconversion of beta-pyran and beta-furan forms of D-ribose. The protein is D-ribose pyranase of Geobacillus thermodenitrificans (strain NG80-2).